A 154-amino-acid polypeptide reads, in one-letter code: Myoglobin (154 aa).

Positions 2–148 constitute a Globin domain; sequence GLSDGEWQMV…FRNDIAAKYK (147 aa). A phosphoserine mark is found at Ser4 and Ser32. Position 65 (His65) interacts with nitrite. His65 is an O2 binding site. Thr68 is subject to Phosphothreonine. His94 lines the heme b pocket. Phosphoserine occurs at positions 121 and 133.

This sequence belongs to the globin family. Monomeric.

It is found in the cytoplasm. The protein resides in the sarcoplasm. It catalyses the reaction Fe(III)-heme b-[protein] + nitric oxide + H2O = Fe(II)-heme b-[protein] + nitrite + 2 H(+). The enzyme catalyses H2O2 + AH2 = A + 2 H2O. Functionally, monomeric heme protein which primary function is to store oxygen and facilitate its diffusion within muscle tissues. Reversibly binds oxygen through a pentacoordinated heme iron and enables its timely and efficient release as needed during periods of heightened demand. Depending on the oxidative conditions of tissues and cells, and in addition to its ability to bind oxygen, it also has a nitrite reductase activity whereby it regulates the production of bioactive nitric oxide. Under stress conditions, like hypoxia and anoxia, it also protects cells against reactive oxygen species thanks to its pseudoperoxidase activity. The protein is Myoglobin of Rattus norvegicus (Rat).